The chain runs to 448 residues: MNINTSPDQIIRSSAQVTPGYMSGFGNSFETEALPGALPIGRNSPQRCAYGLYAEQLSGSPFTAPRGTNERSWLYRIRPSVKHSGRFEKADAGLWRSAPCHEYDLPIAQMRWDPTPVPKEEVTFVQGVQTMTTAGDVNTQAGMAAHVYLITKSMVDQHFYNADGELMFVLQQGNLRLVTEFGRIDAEPGEIVVIPRGVKFRVEIPNGPARGYLCENYGGAFTLPERGPIGANCLANARDFLTPVANYEDKDTPTELFVKWGGSLFKTTLPHSPIDVVAWHGNYAPYKYDLRTFSPVGAIGFDHPDPSIFTVLTSPSETAGTANIDFVIFPERWMVADNTFRPPWYHMNIMSEFMGLIYGVYDAKPQGFVPGGMSLHNCMLPHGPDRDAFEHASNGELKPVKLTGTMAFMFETRYPQRVTAHAANASTLQDDYADCWKGLEKRFDPNRP.

Residue H303 is the Proton acceptor of the active site. 2 residues coordinate Fe cation: H346 and E352. Residues Y361 and H382 each coordinate homogentisate. Fe cation is bound at residue H382.

It belongs to the homogentisate dioxygenase family. In terms of assembly, hexamer; dimer of trimers. Fe cation is required as a cofactor.

It catalyses the reaction homogentisate + O2 = 4-maleylacetoacetate + H(+). The protein operates within amino-acid degradation; L-phenylalanine degradation; acetoacetate and fumarate from L-phenylalanine: step 4/6. Its function is as follows. Involved in the catabolism of homogentisate (2,5-dihydroxyphenylacetate or 2,5-OH-PhAc), a central intermediate in the degradation of phenylalanine and tyrosine. Catalyzes the oxidative ring cleavage of the aromatic ring of homogentisate to yield maleylacetoacetate. The protein is Homogentisate 1,2-dioxygenase of Bradyrhizobium diazoefficiens (strain JCM 10833 / BCRC 13528 / IAM 13628 / NBRC 14792 / USDA 110).